The chain runs to 470 residues: ATP synthase subunit beta (470 aa).

Position 155 to 162 (155 to 162 (GGAGVGKT)) interacts with ATP.

Belongs to the ATPase alpha/beta chains family. In terms of assembly, F-type ATPases have 2 components, CF(1) - the catalytic core - and CF(0) - the membrane proton channel. CF(1) has five subunits: alpha(3), beta(3), gamma(1), delta(1), epsilon(1). CF(0) has three main subunits: a(1), b(2) and c(9-12). The alpha and beta chains form an alternating ring which encloses part of the gamma chain. CF(1) is attached to CF(0) by a central stalk formed by the gamma and epsilon chains, while a peripheral stalk is formed by the delta and b chains.

It is found in the cell inner membrane. It carries out the reaction ATP + H2O + 4 H(+)(in) = ADP + phosphate + 5 H(+)(out). Functionally, produces ATP from ADP in the presence of a proton gradient across the membrane. The catalytic sites are hosted primarily by the beta subunits. This chain is ATP synthase subunit beta, found in Oleidesulfovibrio alaskensis (strain ATCC BAA-1058 / DSM 17464 / G20) (Desulfovibrio alaskensis).